The chain runs to 344 residues: Anthranilate phosphoribosyltransferase (344 aa).

Residues glycine 81, 84 to 85 (GD), serine 89, 91 to 94 (NIST), 109 to 117 (KHGNRALSS), and alanine 121 contribute to the 5-phospho-alpha-D-ribose 1-diphosphate site. Glycine 81 provides a ligand contact to anthranilate. Serine 93 contributes to the Mg(2+) binding site. Residue asparagine 112 participates in anthranilate binding. Arginine 167 is a binding site for anthranilate. The Mg(2+) site is built by aspartate 226 and glutamate 227.

It belongs to the anthranilate phosphoribosyltransferase family. As to quaternary structure, homodimer. It depends on Mg(2+) as a cofactor.

It catalyses the reaction N-(5-phospho-beta-D-ribosyl)anthranilate + diphosphate = 5-phospho-alpha-D-ribose 1-diphosphate + anthranilate. The protein operates within amino-acid biosynthesis; L-tryptophan biosynthesis; L-tryptophan from chorismate: step 2/5. In terms of biological role, catalyzes the transfer of the phosphoribosyl group of 5-phosphorylribose-1-pyrophosphate (PRPP) to anthranilate to yield N-(5'-phosphoribosyl)-anthranilate (PRA). This chain is Anthranilate phosphoribosyltransferase, found in Xanthobacter autotrophicus (strain ATCC BAA-1158 / Py2).